Here is an 824-residue protein sequence, read N- to C-terminus: Intraflagellar transport protein 88 homolog (824 aa).

The segment at 113–134 is disordered; it reads FDPLSQSRGPASPLEAKKKDSP. 12 TPR repeats span residues 197 to 230, 233 to 266, 272 to 305, 307 to 338, 415 to 448, 450 to 483, 484 to 517, 518 to 551, 552 to 585, 586 to 619, 620 to 653, and 654 to 687; these read YSVLFNLASQYSVNEMYAEALNTYQVIVKNKMFS, GILKMNMGNIYLKQRNYSKAIKFYRMALDQVPSV, IKIMQNIGVTFIQAGQYSDAINSYEHIMSMAPNL, AGYNLTICYFAIGDREKMKKAFQKLITVPLEI, NDLEINKAVTYLRQKDYNQAVEILKVLEKKDSRV, SAAATNLSALYYMGKDFAQASSYADIAVNSDRYN, PAALTNKGNTVFANGDYEKAAEFYKEALRNDSSC, TEALYNIGLTYEKLNRLDEALDCFLKLHAILRNS, AEVLYQIANIYELMENPSQAIEWLMQVVSVIPTD, PQVLSKLGELYDREGDKSQAFQYYYESYRYFPCN, IEVIEWLGAYYIDTQFWEKAIQYFERASLIQPTQ, and VKWQLMVASCFRRSGNYQKALDTYKDTHRKFPEN. The segment at 724-824 is disordered; that stretch reads EQRIKSGRDG…EELGDDLLPE (101 aa). Polar residues predominate over residues 748–757; the sequence is DSGQNYSASS. Over residues 797-808 the composition is skewed to basic and acidic residues; sequence ERPKTAAKKRID. The segment covering 809–824 has biased composition (acidic residues); that stretch reads EDDFADEELGDDLLPE.

Component of the IFT complex B, at least composed of IFT20, IFT22, IFT25, IFT27, IFT46, IFT52, TRAF3IP1/IFT54, IFT57, IFT74, IFT80, IFT81, and IFT88. Interacts with IFT20, IFT22, IFT25, IFT27, IFT52, TRAF3IP1, IFT74, IFT80 and IFT81. Interacts with IFT172. Interacts with IFT57. Interacts with IFT46. Interacts with IFT70B. Interacts with C2CD3. Interacts with ENTR1 (via N-terminus). Interacts with LRRC56. Interacts with DZIP1. Interacts with CCDC38. Interacts with CCDC146. Interacts with CFAP53. In terms of tissue distribution, expressed in the heart, brain, liver, lung, kidney, skeletal muscle and pancreas.

Its subcellular location is the cytoplasm. It localises to the cytoskeleton. The protein resides in the microtubule organizing center. The protein localises to the centrosome. It is found in the centriole. Its subcellular location is the cell projection. It localises to the cilium. The protein resides in the cilium basal body. The protein localises to the flagellum. In terms of biological role, positively regulates primary cilium biogenesis. Also involved in autophagy since it is required for trafficking of ATG16L and the expansion of the autophagic compartment. In Homo sapiens (Human), this protein is Intraflagellar transport protein 88 homolog (IFT88).